Consider the following 194-residue polypeptide: Oligoribonuclease (194 aa).

One can recognise an Exonuclease domain in the interval 11–174 (LIWIDLEMTG…SDVRDSIDEL (164 aa)). The active site involves Tyr132.

This sequence belongs to the oligoribonuclease family.

It is found in the cytoplasm. Its function is as follows. 3'-to-5' exoribonuclease specific for small oligoribonucleotides. The protein is Oligoribonuclease of Xanthomonas euvesicatoria pv. vesicatoria (strain 85-10) (Xanthomonas campestris pv. vesicatoria).